The primary structure comprises 530 residues: Pyridoxine/pyridoxamine 5'-phosphate oxidase 1, chloroplastic (530 aa).

Residues 1 to 64 (MRNVIRRVTT…TLCTKVIIPN (64 aa)) constitute a chloroplast transit peptide. Met-65 is subject to N-acetylmethionine. Residues 81 to 297 (AAEIDETLMG…SVAEKYKLEL (217 aa)) enclose the YjeF N-terminal domain. Residue 131-135 (NNGGD) participates in (6S)-NADPHX binding. Asn-132 and Asp-196 together coordinate K(+). (6S)-NADPHX-binding positions include 200-206 (GFSFHGA) and Asp-238. K(+) is bound at residue Ser-241. 247-250 (EGDH) contacts pyridoxal 5'-phosphate. 321–324 (RVNY) is a substrate binding site. Position 325 to 327 (325 to 327 (VSP)) interacts with pyridoxal 5'-phosphate. 374-377 (RMVL) contributes to the FMN binding site. Residue Lys-379 participates in pyridoxal 5'-phosphate binding. FMN-binding positions include 389–390 (FT), 395–396 (KK), and Gln-418. The pyridoxal 5'-phosphate site is built by Tyr-436, Arg-440, and Ser-444. FMN is bound by residues 453 to 454 (QS) and Trp-499. Residue 505-507 (RLH) participates in pyridoxal 5'-phosphate binding. An FMN-binding site is contributed by Arg-509.

This sequence in the N-terminal section; belongs to the NnrE/AIBP family. In the C-terminal section; belongs to the pyridoxamine 5'-phosphate oxidase family. As to quaternary structure, homodimer. It depends on FMN as a cofactor. Requires K(+) as cofactor. In terms of tissue distribution, expressed in leaves, stems, flowers and roots.

It is found in the plastid. The protein resides in the chloroplast. The enzyme catalyses pyridoxamine 5'-phosphate + O2 + H2O = pyridoxal 5'-phosphate + H2O2 + NH4(+). The catalysed reaction is pyridoxine 5'-phosphate + O2 = pyridoxal 5'-phosphate + H2O2. It carries out the reaction (6R)-NADHX = (6S)-NADHX. It catalyses the reaction (6R)-NADPHX = (6S)-NADPHX. The protein operates within cofactor metabolism; pyridoxal 5'-phosphate salvage; pyridoxal 5'-phosphate from pyridoxamine 5'-phosphate: step 1/1. Its pathway is cofactor metabolism; pyridoxal 5'-phosphate salvage; pyridoxal 5'-phosphate from pyridoxine 5'-phosphate: step 1/1. Functionally, catalyzes the oxidation of either pyridoxine 5'-phosphate (PNP) or pyridoxamine 5'-phosphate (PMP) into pyridoxal 5'-phosphate (PLP). Involved in the PLP salvage pathway. Has a higher preference for PNP over PMP. May also catalyze the epimerization of the S- and R-forms of NAD(P)HX, a damaged form of NAD(P)H that is a result of enzymatic or heat-dependent hydration. This is a prerequisite for the S-specific NAD(P)H-hydrate dehydratase to allow the repair of both epimers of NAD(P)HX. This Arabidopsis thaliana (Mouse-ear cress) protein is Pyridoxine/pyridoxamine 5'-phosphate oxidase 1, chloroplastic (PPOX1).